The following is a 339-amino-acid chain: MRLLDGGSFTAESSREVVQANCVHWRKKFSFMCKMSASASTGILDPCIYRVSVRKELKGGKAYAKLGFADLNLAEFAGSGNTTRRCLLEGYDTKNTRQDNSILKVLISMQLMSGDPCFKTPPSTSMSIPIAGESESLEEDRKGGETLKVHLGIADLSAKSASVPDELGAWGHSRTSSYASQQSKVSGYSTCHSRSSSFSEFCHRRNTSVGSTSTGIESILEPCDETEPITAEPSPDPTAAAATATTTTAKEEEASEKLARCPVKQDSVESQLKRVDDTRVDADDIVEKILQSQDFSLDSSAEEEGLRLFVGPGGSTTFGSHHLPNRVGSGAYEQVVIKR.

Residues 1 to 111 (MRLLDGGSFT…ILKVLISMQL (111 aa)) enclose the C2 NT-type domain. Serine 197 carries the post-translational modification Phosphoserine. The disordered stretch occupies residues 226–262 (TEPITAEPSPDPTAAAATATTTTAKEEEASEKLARCP). The span at 230 to 248 (TAEPSPDPTAAAATATTTT) shows a compositional bias: low complexity. The span at 249–259 (AKEEEASEKLA) shows a compositional bias: basic and acidic residues. A phosphoserine mark is found at serine 255, serine 267, serine 299, serine 300, and serine 329.

The protein belongs to the EEIG family. As to expression, expressed in bone marrow-derived macrophages.

The sequence is that of EEIG family member 2 (Eeig2) from Mus musculus (Mouse).